A 507-amino-acid chain; its full sequence is ATP synthase subunit alpha (507 aa).

170–177 (GDRQTGKT) is an ATP binding site.

It belongs to the ATPase alpha/beta chains family. As to quaternary structure, F-type ATPases have 2 components, CF(1) - the catalytic core - and CF(0) - the membrane proton channel. CF(1) has five subunits: alpha(3), beta(3), gamma(1), delta(1), epsilon(1). CF(0) has three main subunits: a(1), b(2) and c(9-12). The alpha and beta chains form an alternating ring which encloses part of the gamma chain. CF(1) is attached to CF(0) by a central stalk formed by the gamma and epsilon chains, while a peripheral stalk is formed by the delta and b chains.

It localises to the cell inner membrane. The catalysed reaction is ATP + H2O + 4 H(+)(in) = ADP + phosphate + 5 H(+)(out). Its function is as follows. Produces ATP from ADP in the presence of a proton gradient across the membrane. The alpha chain is a regulatory subunit. The chain is ATP synthase subunit alpha from Thermosipho melanesiensis (strain DSM 12029 / CIP 104789 / BI429).